We begin with the raw amino-acid sequence, 209 residues long: Casparian strip membrane protein 1 (209 aa).

The interval 1 to 35 (MKTGESTAIDIAPETNNSGPIGKKKSTTPLLAAPV) is disordered. Topologically, residues 1–46 (MKTGESTAIDIAPETNNSGPIGKKKSTTPLLAAPVPDRGTHRMKRG) are cytoplasmic. A helical transmembrane segment spans residues 47-67 (LAIFDFVLRIGVLASALAAAA). At 68–96 (AMGTSEQTLPFFTQFFQFEASYDDLPTFQ) the chain is on the extracellular side. A helical transmembrane segment spans residues 97 to 117 (FFVVAMAVVAGYVVLSIPFSI). The Cytoplasmic segment spans residues 118 to 129 (VCIIRPHAAGPR). Residues 130–150 (VLLLILDSVALTLNTAAAGAA) form a helical membrane-spanning segment. Residues 151-182 (AAVVSLAHSGNSSTNWLAICNQFGDFCQQASG) lie on the Extracellular side of the membrane. A glycan (N-linked (GlcNAc...) asparagine) is linked at Asn-161. The chain crosses the membrane as a helical span at residues 183 to 203 (AVVGSFAAVLLFLLLILFSAL). Residues 204-209 (SLKNSH) are Cytoplasmic-facing.

It belongs to the Casparian strip membrane proteins (CASP) family. In terms of assembly, homodimer and heterodimers.

The protein localises to the cell membrane. Regulates membrane-cell wall junctions and localized cell wall deposition. Required for establishment of the Casparian strip membrane domain (CSD) and the subsequent formation of Casparian strips, a cell wall modification of the root endodermis that determines an apoplastic barrier between the intraorganismal apoplasm and the extraorganismal apoplasm and prevents lateral diffusion. This Cucumis melo (Muskmelon) protein is Casparian strip membrane protein 1.